Reading from the N-terminus, the 414-residue chain is uncharacterized protein (414 aa).

The protein belongs to the glycosyltransferase 28 family.

This is an uncharacterized protein from Mycobacterium tuberculosis (strain CDC 1551 / Oshkosh).